Here is a 210-residue protein sequence, read N- to C-terminus: Large ribosomal subunit protein uL15 (210 aa).

Disordered stretches follow at residues 1 to 64 (MADD…AAPR) and 76 to 104 (AAGAKKEKTRVGRGEGSKGKTAGRGTKGT). Low complexity predominate over residues 9 to 54 (EAAAKPVAEKATATALAKKAPAKAAAADKAAPAAKGETVAAKPAKA). Positions 79 to 93 (AKKEKTRVGRGEGSK) are enriched in basic and acidic residues.

This sequence belongs to the universal ribosomal protein uL15 family. In terms of assembly, part of the 50S ribosomal subunit.

Binds to the 23S rRNA. This is Large ribosomal subunit protein uL15 from Leifsonia xyli subsp. xyli (strain CTCB07).